Consider the following 307-residue polypeptide: Glutaminase (307 aa).

Residues Ser67, Asn117, Glu161, Asn168, Tyr192, Tyr243, and Val261 each coordinate substrate.

It belongs to the glutaminase family. Homotetramer.

The enzyme catalyses L-glutamine + H2O = L-glutamate + NH4(+). The polypeptide is Glutaminase (Streptomyces coelicolor (strain ATCC BAA-471 / A3(2) / M145)).